A 128-amino-acid chain; its full sequence is Large ribosomal subunit protein bL12 (128 aa).

It belongs to the bacterial ribosomal protein bL12 family. In terms of assembly, homodimer. Part of the ribosomal stalk of the 50S ribosomal subunit. Forms a multimeric L10(L12)X complex, where L10 forms an elongated spine to which 2 to 4 L12 dimers bind in a sequential fashion. Binds GTP-bound translation factors.

Forms part of the ribosomal stalk which helps the ribosome interact with GTP-bound translation factors. Is thus essential for accurate translation. This is Large ribosomal subunit protein bL12 from Kineococcus radiotolerans (strain ATCC BAA-149 / DSM 14245 / SRS30216).